Consider the following 376-residue polypeptide: Carbamoyl phosphate synthase small chain (376 aa).

Positions 1–183 (MSKAVLVLED…PDGPPGVSRF (183 aa)) are CPSase. 3 residues coordinate L-glutamine: Ser46, Gly232, and Gly234. The region spanning 184–376 (TVAALDLGIK…FVELMAGEGR (193 aa)) is the Glutamine amidotransferase type-1 domain. Cys260 functions as the Nucleophile in the catalytic mechanism. Phe261, Gln264, Asn302, Gly304, and Phe305 together coordinate L-glutamine. Residues His350 and Glu352 contribute to the active site.

This sequence belongs to the CarA family. As to quaternary structure, composed of two chains; the small (or glutamine) chain promotes the hydrolysis of glutamine to ammonia, which is used by the large (or ammonia) chain to synthesize carbamoyl phosphate. Tetramer of heterodimers (alpha,beta)4.

It catalyses the reaction hydrogencarbonate + L-glutamine + 2 ATP + H2O = carbamoyl phosphate + L-glutamate + 2 ADP + phosphate + 2 H(+). The catalysed reaction is L-glutamine + H2O = L-glutamate + NH4(+). It functions in the pathway amino-acid biosynthesis; L-arginine biosynthesis; carbamoyl phosphate from bicarbonate: step 1/1. Its pathway is pyrimidine metabolism; UMP biosynthesis via de novo pathway; (S)-dihydroorotate from bicarbonate: step 1/3. Small subunit of the glutamine-dependent carbamoyl phosphate synthetase (CPSase). CPSase catalyzes the formation of carbamoyl phosphate from the ammonia moiety of glutamine, carbonate, and phosphate donated by ATP, constituting the first step of 2 biosynthetic pathways, one leading to arginine and/or urea and the other to pyrimidine nucleotides. The small subunit (glutamine amidotransferase) binds and cleaves glutamine to supply the large subunit with the substrate ammonia. This Mycobacterium bovis (strain ATCC BAA-935 / AF2122/97) protein is Carbamoyl phosphate synthase small chain.